We begin with the raw amino-acid sequence, 356 residues long: Protein pelota homolog (356 aa).

This sequence belongs to the eukaryotic release factor 1 family. Pelota subfamily. As to quaternary structure, monomer. A divalent metal cation serves as cofactor.

The protein localises to the cytoplasm. In terms of biological role, may function in recognizing stalled ribosomes, interact with stem-loop structures in stalled mRNA molecules, and effect endonucleolytic cleavage of the mRNA. May play a role in the release non-functional ribosomes and degradation of damaged mRNAs. Has endoribonuclease activity. This chain is Protein pelota homolog, found in Aeropyrum pernix (strain ATCC 700893 / DSM 11879 / JCM 9820 / NBRC 100138 / K1).